The sequence spans 353 residues: Probable protein phosphatase 2C 48 (353 aa).

The PPM-type phosphatase domain maps to 54 to 348 (FAAVCSRRGE…DDCSAICLFF (295 aa)). Asp-90, Gly-91, Asp-293, and Asp-339 together coordinate Mn(2+).

It belongs to the PP2C family. It depends on Mg(2+) as a cofactor. Mn(2+) is required as a cofactor.

It carries out the reaction O-phospho-L-seryl-[protein] + H2O = L-seryl-[protein] + phosphate. It catalyses the reaction O-phospho-L-threonyl-[protein] + H2O = L-threonyl-[protein] + phosphate. This is Probable protein phosphatase 2C 48 from Oryza sativa subsp. japonica (Rice).